Here is a 176-residue protein sequence, read N- to C-terminus: Imidazoleglycerol-phosphate dehydratase (176 aa).

This sequence belongs to the imidazoleglycerol-phosphate dehydratase family.

Its subcellular location is the cytoplasm. The catalysed reaction is D-erythro-1-(imidazol-4-yl)glycerol 3-phosphate = 3-(imidazol-4-yl)-2-oxopropyl phosphate + H2O. It functions in the pathway amino-acid biosynthesis; L-histidine biosynthesis; L-histidine from 5-phospho-alpha-D-ribose 1-diphosphate: step 6/9. The chain is Imidazoleglycerol-phosphate dehydratase from Pyrococcus furiosus (strain ATCC 43587 / DSM 3638 / JCM 8422 / Vc1).